The sequence spans 134 residues: Viral interleukin-8 homolog (134 aa).

The N-terminal stretch at 1–22 (MQALLLVLVLFIVQIYLLPGNG) is a signal peptide.

Belongs to the intercrine alpha (chemokine CxC) family. As to quaternary structure, homodimer.

Its subcellular location is the secreted. Plays a role in the early phase of cytolytic infections presumably by recruiting host B or T-lymphocytes. The protein is Viral interleukin-8 homolog (MDV078) of Gallus gallus (Chicken).